The primary structure comprises 166 residues: MRVGLYPGTFDPITLGHLDIIRRASALLDKLVIGVAINRDKGPLFCLEERVAMVEAESIKIAAMTGLEIVTHPFENLLIDCARDVGATVIVRGLRAVADFEYEYQMVGMNRQLDDTIETVFLMAEAEHQAIASKLVKEIARLGGDIEKFVTPEVNAALLNKIGRAG.

Substrate is bound at residue Thr9. ATP-binding positions include 9–10 (TF) and His17. Substrate contacts are provided by Lys41, Leu78, and Arg92. Residues 93-95 (GLR), Glu103, and 128-134 (HQAIASK) each bind ATP.

The protein belongs to the bacterial CoaD family. In terms of assembly, homohexamer. Mg(2+) serves as cofactor.

It is found in the cytoplasm. The enzyme catalyses (R)-4'-phosphopantetheine + ATP + H(+) = 3'-dephospho-CoA + diphosphate. Its pathway is cofactor biosynthesis; coenzyme A biosynthesis; CoA from (R)-pantothenate: step 4/5. In terms of biological role, reversibly transfers an adenylyl group from ATP to 4'-phosphopantetheine, yielding dephospho-CoA (dPCoA) and pyrophosphate. The protein is Phosphopantetheine adenylyltransferase of Roseobacter denitrificans (strain ATCC 33942 / OCh 114) (Erythrobacter sp. (strain OCh 114)).